A 372-amino-acid chain; its full sequence is MNTGLDLEYSFNEILKGFGLSSEIAHIIWLPLPMLIVLVSAVVGVLVTVWLERKISAAAQQRIGPEYAGALGVLQPIADGLKLLVKEDIIPAKADSILFTTGPILVLVPVILSWLIVPFGQNLLISNVGIGIFLWIALSSIQPIGLLMSGYASNNKYSLLGGLRAAAQSISYEIPLALSVLAVVLMTNSLSTIDIVNQQSGAGILSWNIWRQPVGFIIFWICALAECERLPFDLPEAEEELVAGYQTEYAGMKFALFYLGSYINLILSALLVSILYLGGWGFPIPVEIIAKVLNLPINAPVIQVFTASIGIIMTVLKAYLLVFIAILLRWTTPRVRIDQLLDLGWKFLLPISLANLLLTAGLKLALPQFFGG.

The next 8 helical transmembrane spans lie at 27–47 (IIWL…GVLV), 97–117 (ILFT…WLIV), 128–148 (VGIG…GLLM), 176–196 (LALS…IDIV), 204–224 (ILSW…ICAL), 266–286 (ILSA…PIPV), 308–328 (SIGI…AILL), and 347–367 (FLLP…LALP).

This sequence belongs to the complex I subunit 1 family. As to quaternary structure, NDH-1 is composed of at least 11 different subunits.

The protein resides in the cellular thylakoid membrane. The catalysed reaction is a plastoquinone + NADH + (n+1) H(+)(in) = a plastoquinol + NAD(+) + n H(+)(out). It carries out the reaction a plastoquinone + NADPH + (n+1) H(+)(in) = a plastoquinol + NADP(+) + n H(+)(out). In terms of biological role, NDH-1 shuttles electrons from an unknown electron donor, via FMN and iron-sulfur (Fe-S) centers, to quinones in the respiratory and/or the photosynthetic chain. The immediate electron acceptor for the enzyme in this species is believed to be plastoquinone. Couples the redox reaction to proton translocation, and thus conserves the redox energy in a proton gradient. This Prochlorococcus marinus (strain MIT 9515) protein is NAD(P)H-quinone oxidoreductase subunit 1.